The sequence spans 178 residues: Inorganic pyrophosphatase (178 aa).

Residues Lys30, Arg44, and Tyr56 each coordinate substrate. Residues Asp66, Asp71, and Asp103 each contribute to the Mg(2+) site. Tyr140 is a substrate binding site.

Belongs to the PPase family. As to quaternary structure, homohexamer. Requires Mg(2+) as cofactor.

The protein resides in the cytoplasm. The catalysed reaction is diphosphate + H2O = 2 phosphate + H(+). Functionally, catalyzes the hydrolysis of inorganic pyrophosphate (PPi) forming two phosphate ions. The polypeptide is Inorganic pyrophosphatase (Pyrococcus abyssi (strain GE5 / Orsay)).